Reading from the N-terminus, the 314-residue chain is MAVAAPSPAAAAEPGPAARPRSTRGQVRLPGGEFAMGDAFGEGYPADGETPVHTVRLRPFHIDETAVTNARFAAFVKATGHVTDAERFGSSAVFHLVVAAPDADVLGSAAGAPWWINVRGAHWRRPEGARSDITGRPNHPVVHVSWNDATAYARWAGKRLPTEAEWEYAARGGLAGRRYAWGDELTPGGRWRCNIWQGRFPHVNTAEDGHLSTAPVKSYRPNGHGLWNTAGNVWEWCSDWFSPTYYAESPTVDPHGPGTGAARVLRGGSYLCHDSYCNRYRVAARSSNTPDSSSGNLGFRCANDADLTSGSAAE.

Positions M1–P20 are enriched in low complexity. A disordered region spans residues M1 to G31. Ca(2+)-binding residues include N194, I195, D208, and H210. Residues C272 and C277 each contribute to the Cu(2+) site.

It belongs to the sulfatase-modifying factor family. It depends on Cu(2+) as a cofactor.

It catalyses the reaction L-cysteinyl-[sulfatase] + 2 a thiol + O2 = an organic disulfide + 3-oxo-L-alanyl-[sulfatase] + hydrogen sulfide + H2O + H(+). It participates in protein modification; sulfatase oxidation. In terms of biological role, oxidase that catalyzes the conversion of cysteine to 3-oxoalanine on target proteins. 3-oxoalanine modification, which is also named formylglycine (fGly), occurs in the maturation of arylsulfatases and some alkaline phosphatases that use the hydrated form of 3-oxoalanine as a catalytic nucleophile. This is Formylglycine-generating enzyme from Streptomyces coelicolor (strain ATCC BAA-471 / A3(2) / M145).